The following is a 370-amino-acid chain: Tomoregulin-1 (370 aa).

The N-terminal stretch at 1–36 (MDGLHPASWMLLLGSLAFWSASSLLLFSLALPGARA) is a signal peptide. Residues 37–320 (SNQLLSECHN…VPSRQKLTHV (284 aa)) lie on the Extracellular side of the membrane. Asn-53 is a glycosylation site (N-linked (GlcNAc...) asparagine). Kazal-like domains lie at 88-135 (ICQF…PCFS) and 179-227 (VCNI…SCIE). Intrachain disulfides connect Cys-89-Cys-119, Cys-93-Cys-112, Cys-101-Cys-133, Cys-180-Cys-211, Cys-184-Cys-204, Cys-193-Cys-225, Cys-265-Cys-278, Cys-273-Cys-289, and Cys-291-Cys-300. Positions 261 to 301 (NYIPCSENYNGYCVHGKCELSYSSQKASCRCDSGYTGQYCD) constitute an EGF-like domain. A helical membrane pass occupies residues 321–341 (LIAAIIGAVQIAIIVAIVMCI). The Cytoplasmic segment spans residues 342–370 (TRKCPKNNRGRRQKQNLGHFSSDTSSRMV). Positions 349-370 (NRGRRQKQNLGHFSSDTSSRMV) are disordered. The segment covering 356-370 (QNLGHFSSDTSSRMV) has biased composition (polar residues).

It belongs to the tomoregulin family. In terms of assembly, interacts with cripto. As to expression, expressed at highest levels in brain, and at lower levels in neuroendocrine tissues. Present in neurons from the diencephalon (at protein level).

Its subcellular location is the cell membrane. Its function is as follows. Inhibits nodal/nr-1 and bmp signaling during neural patterning through interaction with cripto. The sequence is that of Tomoregulin-1 (tmeff1) from Xenopus laevis (African clawed frog).